Reading from the N-terminus, the 376-residue chain is MARVEL domain-containing protein 3 (376 aa).

Residues 1 to 95 (MKNTSGHREP…EKSRQSRARP (95 aa)) are compositionally biased toward basic and acidic residues. The tract at residues 1–134 (MKNTSGHREP…GRRGLESERA (134 aa)) is disordered. Residues 1–173 (MKNTSGHREP…HKCRYLCTGR (173 aa)) lie on the Cytoplasmic side of the membrane. The MARVEL domain occupies 168 to 361 (YLCTGRACWQ…GAVLAFRGYR (194 aa)). A helical membrane pass occupies residues 174–194 (ACWQMLKALLNLLILACSSVS). The Extracellular segment spans residues 195 to 247 (YNSTGGYTGITSLGGIYYYQYGGAYSGFDGADGERAQQLDVQFYQLKLPTVTA). The helical transmembrane segment at 248 to 268 (AMAYSGALMTFSCLTLLAGAL) threads the bilayer. Residues 269–275 (RVPWHCP) are Cytoplasmic-facing. The helical transmembrane segment at 276 to 296 (LWLVIEGLMDALIAGAYVPGL) threads the bilayer. Residues 297-335 (YFFFQHLSAAYSSDVCKERETLYQSKGYSGFNCGVHGGD) are Extracellular-facing. Residues 336–356 (IGAGVFAAMAIGVFAVGAVLA) traverse the membrane as a helical segment. At 357-376 (FRGYRKVKKLKEKPTEMLEF) the chain is on the cytoplasmic side.

As to expression, widely expressed with highest levels in small intestine, colon, stomach and lung. Liver expresses only isoform 2.

It localises to the membrane. It is found in the cell junction. The protein resides in the tight junction. As a component of tight junctions, plays a role in paracellular ion conductivity. The protein is MARVEL domain-containing protein 3 (Marveld3) of Mus musculus (Mouse).